The sequence spans 223 residues: MDELKKLAGVTAAKYVKNGMIVGLGTGSTAYFFVEEIGRRVKEEGLQVVGVTTSNRTTEQARGLGIPLKSADDIDVIDVTVDGADEVDPDFNGIKGGGGALLMEKIVATPTKEYIWVVDESKLVETLGAFKLPVEVVRYGSERLFRVFKSKGYCPSFRETEGDRFITDMGNYIIDLDLKKIEDPKQLANELDHTVGVVEHGLFNGMVNKVIVAGKNGLDILEK.

Substrate is bound by residues T26–T29, D82–D85, and K95–G98. E104 functions as the Proton acceptor in the catalytic mechanism. K122 is a binding site for substrate.

Belongs to the ribose 5-phosphate isomerase family. Homodimer.

The catalysed reaction is aldehydo-D-ribose 5-phosphate = D-ribulose 5-phosphate. Its pathway is carbohydrate degradation; pentose phosphate pathway; D-ribose 5-phosphate from D-ribulose 5-phosphate (non-oxidative stage): step 1/1. Its function is as follows. Catalyzes the reversible conversion of ribose-5-phosphate to ribulose 5-phosphate. The sequence is that of Ribose-5-phosphate isomerase A from Streptococcus agalactiae serotype V (strain ATCC BAA-611 / 2603 V/R).